Here is a 90-residue protein sequence, read N- to C-terminus: uncharacterized protein (90 aa).

The protein localises to the cytoplasm. This is an uncharacterized protein from Saccharomyces cerevisiae (strain ATCC 204508 / S288c) (Baker's yeast).